The sequence spans 248 residues: UPF0736 protein BT9727_1080 (248 aa).

It belongs to the UPF0736 family.

This is UPF0736 protein BT9727_1080 from Bacillus thuringiensis subsp. konkukian (strain 97-27).